The sequence spans 365 residues: Iron-sulfur cluster assembly protein SufC (365 aa).

In terms of domain architecture, ABC transporter spans 118 to 364 (LEINDLHAIE…ESDGYAQFVE (247 aa)). An ATP-binding site is contributed by 152–159 (GRNGSGKS).

This sequence belongs to the ABC transporter superfamily. Ycf16 family. In terms of assembly, component of a complex composed of SufB, SufC and SufD in a stoichiometric ratio of 1:2:1. Interacts with SufB. Interacts with SufD; the interaction enhances the ATPase activity of SufC.

Its subcellular location is the plastid. The protein resides in the apicoplast. The catalysed reaction is ATP + H2O = ADP + phosphate + H(+). Its pathway is cofactor biosynthesis; iron-sulfur cluster biosynthesis. Its function is as follows. Participates in the sulfur mobilization (SUF) pathway for iron-sulfur (Fe-S) cluster biogenesis. As part of a complex consisting of SufB-SufC(2)-SufD, involved in assembly of [4Fe-4S] clusters. Exhibits ATPase activity. The sequence is that of Iron-sulfur cluster assembly protein SufC from Plasmodium berghei (strain Anka).